We begin with the raw amino-acid sequence, 340 residues long: MSSTAVVHGDDLMEPTLQSILSQKTLRWIFVGGKGGVGKTTTSCSLAIQLAKVRKSVLLISTDPAHNLSDAFGQKFGKEARLVDGYSNLSAMEIDPNGSIQDLLASGDSQGDDPLAGLGMGNMMQDLAFSIPGVDEAMSFAEVLKQVKSLSYEVIVFDTAPTGHTLRFLQFPTVLEKALAKLSQLSSQFGPMLNSILGARGGLPGGQNIDELLQKMESLRETISEVNTQFKNPDMTTFVCVCIAEFLSLYETERMIQELTSYGIDTHAIVVNQLLFPKEGSGCEQCNARRKMQKKYLEQIEELYEDFNVVRMPLLVEEVRGKEKLEKFSEMLVHPYVPPQ.

34–41 lines the ATP pocket; sequence KGGVGKTT. Residue D63 is part of the active site. Positions 245 and 272 each coordinate ATP. Zn(2+) is bound by residues C283 and C286. ATP is bound at residue R320.

Belongs to the arsA ATPase family. In terms of assembly, homodimer.

Its subcellular location is the cytoplasm. The protein resides in the endoplasmic reticulum. ATPase required for the post-translational delivery of tail-anchored (TA) proteins to the endoplasmic reticulum. Recognizes and selectively binds the transmembrane domain of TA proteins in the cytosol. This complex then targets to the endoplasmic reticulum by membrane-bound receptors, where the tail-anchored protein is released for insertion. This process is regulated by ATP binding and hydrolysis. ATP binding drives the homodimer towards the closed dimer state, facilitating recognition of newly synthesized TA membrane proteins. ATP hydrolysis is required for insertion. Subsequently, the homodimer reverts towards the open dimer state, lowering its affinity for the membrane-bound receptor, and returning it to the cytosol to initiate a new round of targeting. The chain is ATPase get3 (get3) from Aspergillus fumigatus (strain ATCC MYA-4609 / CBS 101355 / FGSC A1100 / Af293) (Neosartorya fumigata).